A 288-amino-acid chain; its full sequence is ATP synthase gamma chain (288 aa).

Belongs to the ATPase gamma chain family. As to quaternary structure, F-type ATPases have 2 components, CF(1) - the catalytic core - and CF(0) - the membrane proton channel. CF(1) has five subunits: alpha(3), beta(3), gamma(1), delta(1), epsilon(1). CF(0) has three main subunits: a, b and c.

The protein resides in the cell membrane. Functionally, produces ATP from ADP in the presence of a proton gradient across the membrane. The gamma chain is believed to be important in regulating ATPase activity and the flow of protons through the CF(0) complex. This chain is ATP synthase gamma chain, found in Staphylococcus saprophyticus subsp. saprophyticus (strain ATCC 15305 / DSM 20229 / NCIMB 8711 / NCTC 7292 / S-41).